The primary structure comprises 500 residues: Glycerol kinase (500 aa).

Thr-12 is an ADP binding site. ATP-binding residues include Thr-12, Thr-13, and Ser-14. Thr-12 serves as a coordination point for sn-glycerol 3-phosphate. Arg-16 contacts ADP. Sn-glycerol 3-phosphate-binding residues include Arg-82, Glu-83, Tyr-134, and Asp-246. Glycerol contacts are provided by Arg-82, Glu-83, Tyr-134, Asp-246, and Gln-247. ADP contacts are provided by Thr-268 and Gly-312. Thr-268, Gly-312, Gln-316, and Gly-413 together coordinate ATP. Gly-413 and Asn-417 together coordinate ADP.

The protein belongs to the FGGY kinase family.

It catalyses the reaction glycerol + ATP = sn-glycerol 3-phosphate + ADP + H(+). The protein operates within polyol metabolism; glycerol degradation via glycerol kinase pathway; sn-glycerol 3-phosphate from glycerol: step 1/1. Inhibited by fructose 1,6-bisphosphate (FBP). Key enzyme in the regulation of glycerol uptake and metabolism. Catalyzes the phosphorylation of glycerol to yield sn-glycerol 3-phosphate. The protein is Glycerol kinase of Saccharopolyspora erythraea (strain ATCC 11635 / DSM 40517 / JCM 4748 / NBRC 13426 / NCIMB 8594 / NRRL 2338).